We begin with the raw amino-acid sequence, 360 residues long: Phenylalanine--tRNA ligase alpha subunit (360 aa).

A Mg(2+)-binding site is contributed by Glu-260.

It belongs to the class-II aminoacyl-tRNA synthetase family. Phe-tRNA synthetase alpha subunit type 1 subfamily. As to quaternary structure, tetramer of two alpha and two beta subunits. Mg(2+) serves as cofactor.

The protein localises to the cytoplasm. It carries out the reaction tRNA(Phe) + L-phenylalanine + ATP = L-phenylalanyl-tRNA(Phe) + AMP + diphosphate + H(+). The protein is Phenylalanine--tRNA ligase alpha subunit of Afipia carboxidovorans (strain ATCC 49405 / DSM 1227 / KCTC 32145 / OM5) (Oligotropha carboxidovorans).